Consider the following 301-residue polypeptide: Nucleotide-binding protein Noca_2527 (301 aa).

ATP is bound at residue Gly26–Ser33. A GTP-binding site is contributed by Asp77–Ser80.

The protein belongs to the RapZ-like family.

In terms of biological role, displays ATPase and GTPase activities. This is Nucleotide-binding protein Noca_2527 from Nocardioides sp. (strain ATCC BAA-499 / JS614).